The primary structure comprises 571 residues: UvrABC system protein C (571 aa).

A GIY-YIG domain is found at 15–93 (TSPGVYLWKD…IDRYNPEFNI (79 aa)). Residues 184 to 219 (NNYINELTNKMHQAANNMQFELALFLRDGLTYLKKL) form the UVR domain.

It belongs to the UvrC family. As to quaternary structure, interacts with UvrB in an incision complex.

It localises to the cytoplasm. Its function is as follows. The UvrABC repair system catalyzes the recognition and processing of DNA lesions. UvrC both incises the 5' and 3' sides of the lesion. The N-terminal half is responsible for the 3' incision and the C-terminal half is responsible for the 5' incision. The polypeptide is UvrABC system protein C (Mycoplasmopsis bovis (strain ATCC 25523 / DSM 22781 / NCTC 10131 / PG45) (Mycoplasma bovis)).